We begin with the raw amino-acid sequence, 277 residues long: Transcription factor HES-4-B (277 aa).

Residues 1–44 are disordered; that stretch reads MPADSMEKPTASPIAGAPANSAQTPDKPKSASEHRKSSKPIMEK. Residues 26 to 35 are compositionally biased toward basic and acidic residues; sequence DKPKSASEHR. In terms of domain architecture, bHLH spans 34 to 91; that stretch reads HRKSSKPIMEKRRRARINESLGQLKTLILDALKKDSSRHSKLEKADILEMTVKHLRNL. One can recognise an Orange domain in the interval 110-143; sequence YRAGFNECMNEVTRFLSTCEGVNTEVRTRLLGHL. A disordered region spans residues 258 to 277; sequence VSPLGGSTRADSAESVWRPW. A WRPW motif motif is present at residues 274-277; it reads WRPW.

Transcription repression requires formation of a complex with a corepressor protein of the Groucho/TLE family. Interacts with the bHLH protein hes6; this interaction may inhibit the transcriptional repressor activity. Binds DNA in the form of a heterodimer with the bHLH protein hey1/hrt1. Interacts (via Orange domain) with id3 (via HLH domain). Dynamically expressed in the borders of several tissue territories. Expressed in the pre-placodal ectoderm (PPE) from gastrula stage. During gastrulation, expressed in the deep layer of the dorsal lip, the Spemann organizer and three distinct regions in the prospective neuroectoderm: neural plate border, presumptive floor plate/notoplate and anterior neural plate. At later stages, expression is localized to the anterior of the prechordal plate, the presomitic mesoderm, neural tube, neural crest derivatives and several tissues of the central nervous system, with expression in the developing floor plate continues to at least the tadpole stage. From the early tailbud stage, expressed in the dorsoanterior region of the developing pronephros. During early tailbud stages, broadly expressed within the pronephric mesoderm. and in the sensorial layer of the ectoderm covering the pronephros anlagen. During late tailbud to early tadpole stages, expressed in the ventral region of the pronephros. Expression remains in the proximal and distal tubules at late tadpole stages (stage 35).

The protein resides in the nucleus. Transcriptional repressor. Binds DNA on N-box motifs: 5'-CACNAG-3'. Promotes floor plate development and prechordal plate development. Required for lens development as early as the stage of lens field formation, partly through regulation of gene expression of the cell cycle inhibitor cdknx/p27(xic1). Required for formation of the neural crest downstream of multiple signaling pathways, and acts at the neural plate border via both DNA-binding dependent and independent mechanisms; acts in a DNA-binding dependent manner to repress pro-apoptotic and neural crest differentiation genes, including id3, delta1, and cdknx/p27(xic1), and thus promote the cell survival of neural plate border cells and maintain them in an undifferentiated state. Represses transcription of id3, at least in part through the repression of bmp4. On the other hand, acts in a DNA-independent manner separate from the transcriptional repressor function, to stimulate cell proliferation and promote neural crest formation. Via this DNA-independent route, acts in neurulae upstream of stat3 to transiently up-regulate the notch ligand dll1/delta1, which in turn up-regulates id3 expression. Then interacts directly with id3, which blocks the transcriptional repressor function of hes4-B/hairy2b to allow the progression of neural crest progenitors through specification and differentiation. Also acts via repressor-dependent and repressor-independent mechanisms in early gastrulae to establish the prospective anterior prechordal mesoderm identity in the Spemann organizer; induces specific genes independently from direct transcriptional regulation, and represses the genes specific for neighboring tissues through direct transcriptional repression. Modulates lateral inhibition during notch signaling and regulates the cell context dependent effects of notch (which can have inhibitory, permissive or enhancing roles in muscle or neural differentiation). Inhibits myogenesis. This Xenopus laevis (African clawed frog) protein is Transcription factor HES-4-B (hes4-b).